We begin with the raw amino-acid sequence, 174 residues long: Gamma-crystallin D (174 aa).

2 consecutive Beta/gamma crystallin 'Greek key' domains span residues 2–40 (GKIT…RVDS) and 41–83 (GCWM…RLIP). Residues 84-87 (HAGS) form a connecting peptide region. 2 consecutive Beta/gamma crystallin 'Greek key' domains span residues 88–128 (HRLR…NVLE) and 129–171 (GSWV…RRVI).

The protein belongs to the beta/gamma-crystallin family.

Functionally, crystallins are the dominant structural components of the vertebrate eye lens. The polypeptide is Gamma-crystallin D (CRYGD) (Bos taurus (Bovine)).